We begin with the raw amino-acid sequence, 395 residues long: Chaperone protein DnaJ 2 (395 aa).

A J domain is found at 10–75; that stretch reads NYYADLGVSS…KKRKEYDELK (66 aa). Residues 165–242 form a CR-type zinc finger; the sequence is GTTIPVELTG…CHGRGTVRKS (78 aa). The Zn(2+) site is built by C178, C181, C194, C197, C216, C219, C230, and C233. CXXCXGXG motif repeat units lie at residues 178 to 185, 194 to 201, 216 to 223, and 230 to 237; these read CNTCHGSG, CGTCDGTG, CATCGGTG, and CDNCHGRG.

It belongs to the DnaJ family. As to quaternary structure, homodimer. The cofactor is Zn(2+).

Its subcellular location is the cytoplasm. Its function is as follows. Participates actively in the response to hyperosmotic and heat shock by preventing the aggregation of stress-denatured proteins and by disaggregating proteins, also in an autonomous, DnaK-independent fashion. Unfolded proteins bind initially to DnaJ; upon interaction with the DnaJ-bound protein, DnaK hydrolyzes its bound ATP, resulting in the formation of a stable complex. GrpE releases ADP from DnaK; ATP binding to DnaK triggers the release of the substrate protein, thus completing the reaction cycle. Several rounds of ATP-dependent interactions between DnaJ, DnaK and GrpE are required for fully efficient folding. Also involved, together with DnaK and GrpE, in the DNA replication of plasmids through activation of initiation proteins. In Corynebacterium glutamicum (strain ATCC 13032 / DSM 20300 / JCM 1318 / BCRC 11384 / CCUG 27702 / LMG 3730 / NBRC 12168 / NCIMB 10025 / NRRL B-2784 / 534), this protein is Chaperone protein DnaJ 2.